Reading from the N-terminus, the 309-residue chain is D-alanine--D-alanine ligase (309 aa).

The ATP-grasp domain occupies 105 to 304 (KQIWHSVGLP…FNDLVERILA (200 aa)). 135–190 (LQELGGRVIVKPAREGSSIGMSIADNGRSLALALQHAAEFDDDLLVEQWVEGAEYT) serves as a coordination point for ATP. Asp258, Glu271, and Asn273 together coordinate Mg(2+).

Belongs to the D-alanine--D-alanine ligase family. Mg(2+) is required as a cofactor. Mn(2+) serves as cofactor.

Its subcellular location is the cytoplasm. The catalysed reaction is 2 D-alanine + ATP = D-alanyl-D-alanine + ADP + phosphate + H(+). The protein operates within cell wall biogenesis; peptidoglycan biosynthesis. Functionally, cell wall formation. This chain is D-alanine--D-alanine ligase, found in Idiomarina loihiensis (strain ATCC BAA-735 / DSM 15497 / L2-TR).